The primary structure comprises 291 residues: Small ribosomal subunit protein uS3 (291 aa).

Residues 39 to 110 (IRLEIMKFLK…KISIKIKEVK (72 aa)) form the KH type-2 domain.

It belongs to the universal ribosomal protein uS3 family. Part of the 30S ribosomal subunit. Forms a tight complex with proteins S10 and S14.

In terms of biological role, binds the lower part of the 30S subunit head. Binds mRNA in the 70S ribosome, positioning it for translation. The sequence is that of Small ribosomal subunit protein uS3 from Borreliella afzelii (strain PKo) (Borrelia afzelii).